The chain runs to 76 residues: Defensin-like protein 5 (76 aa).

The first 29 residues, 1–29 (MKVSPRLNSALLLLFMILATVMGLVTVEA), serve as a signal peptide directing secretion. Disulfide bonds link Cys-32–Cys-76, Cys-43–Cys-63, Cys-49–Cys-70, and Cys-53–Cys-72.

This sequence belongs to the DEFL family.

The protein resides in the secreted. Functionally, confers broad-spectrum resistance to pathogens. The protein is Defensin-like protein 5 (PDF2.4) of Arabidopsis thaliana (Mouse-ear cress).